The chain runs to 88 residues: Co-chaperonin GroES (88 aa).

This sequence belongs to the GroES chaperonin family. Heptamer of 7 subunits arranged in a ring. Interacts with the chaperonin GroEL.

The protein resides in the cytoplasm. Its function is as follows. Together with the chaperonin GroEL, plays an essential role in assisting protein folding. The GroEL-GroES system forms a nano-cage that allows encapsulation of the non-native substrate proteins and provides a physical environment optimized to promote and accelerate protein folding. GroES binds to the apical surface of the GroEL ring, thereby capping the opening of the GroEL channel. In Rubrobacter xylanophilus (strain DSM 9941 / JCM 11954 / NBRC 16129 / PRD-1), this protein is Co-chaperonin GroES.